The chain runs to 928 residues: Retinoblastoma-associated protein (928 aa).

Residues 1 to 42 (MPPKTPRKTAATAAAAAAEPPAPPPPPPPEEDPEQDSGPEDL) form a disordered region. N,N-dimethylproline is present on P2. Residues 8-19 (KTAATAAAAAAE) show a composition bias toward low complexity. Positions 29 to 39 (PEEDPEQDSGP) are enriched in acidic residues. The residue at position 37 (S37) is a Phosphoserine. S249 is subject to Phosphoserine; by CDK1. At T252 the chain carries Phosphothreonine; by CDK1. Residue T356 is modified to Phosphothreonine. T373 is subject to Phosphothreonine; by CDK1. The segment at 373–579 (TPVRTVMNTI…FDLIKQSKDR (207 aa)) is domain A. A pocket; binds T and E1A region spans residues 373-771 (TPVRTVMNTI…QRLKTNILQY (399 aa)). S567 bears the Phosphoserine; by CDK2 mark. Residues 580-639 (EGPTDHLESACPLNLPLQNNHTAADMYLSPVRSPKKKGSTTRVNSTANAETQATSAFQTQ) form a spacer region. The residue at position 608 (S608) is a Phosphoserine. The interval 610–632 (VRSPKKKGSTTRVNSTANAETQA) is disordered. S612 bears the Phosphoserine; by CHEK2 and CHEK1 mark. Residues 619–632 (TTRVNSTANAETQA) show a composition bias toward polar residues. S624 carries the phosphoserine modification. The tract at residues 640 to 771 (KPLKSTSLSL…QRLKTNILQY (132 aa)) is domain B. The interval 763–928 (RLKTNILQYA…SMDTSNKEEK (166 aa)) is interaction with LIMD1. The interval 771-928 (YASTRPPTLS…SMDTSNKEEK (158 aa)) is domain C; mediates interaction with E4F1. Phosphoserine is present on residues S780, S788, and S795. Residue S807 is modified to Phosphoserine; by CDK1 and CDK3. The residue at position 810 (K810) is an N6-methyllysine; by SMYD2. S811 bears the Phosphoserine; by CDK1 and CDK3 mark. T821 carries the post-translational modification Phosphothreonine; by CDK6. Phosphothreonine is present on T823. Position 826 is a phosphothreonine; by CDK4 (T826). T841 carries the phosphothreonine modification. S855 carries the phosphoserine modification. K860 is modified (N6-methyllysine; by SMYD2). Positions 860–876 (KRSAEGSNPPKPLKKLR) match the Bipartite nuclear localization signal motif. The tract at residues 860-928 (KRSAEGSNPP…SMDTSNKEEK (69 aa)) is disordered. Residues K873 and K874 each carry the N6-acetyllysine; by PCAF modification. Residues 915–928 (KMNDSMDTSNKEEK) show a composition bias toward basic and acidic residues.

It belongs to the retinoblastoma protein (RB) family. In terms of assembly, the hypophosphorylated form interacts with and sequesters the E2F1 transcription factor, thereby inhibiting E2F1 transcription. Interacts with heterodimeric E2F/DP transcription factor complexes containing TFDP1 and either E2F1, E2F3, E2F4 or E2F5, or TFDP2 and E2F4. Interacts (when hyperphosphorylated and hypophosphorylated) with PKP3; the interaction inhibits RB1 interaction with and repression of the transcription factor E2F1, potentially via sequestering RB1 to the cytoplasm. The unphosphorylated form interacts with EID1, ARID3B, KDM5A, SUV39H1, MJD2A/JHDM3A and THOC1. Interacts with the N-terminal domain of TAF1. Interacts with SNW1, ATAD5, AATF, DNMT1, LIN9, LMNA, KMT5B, KMT5C, PELP1, UHRF2 and TMPO-alpha. Interacts with GRIP1 and UBR4. Interacts with ARID4A and KDM5B. Interacts with E4F1 and LIMD1. Interacts with SMARCA4/BRG1 and HDAC1. Interacts with PSMA3 and USP4. Interacts (when methylated at Lys-860) with L3MBTL1. Interacts with CHEK2; phosphorylates RB1. Interacts with CDK1 and CDK2. Interacts with PRMT2. Interacts with CEBPA. P-TEFB complex interacts with RB1; promotes phosphorylation of RB1. Interacts with RBBP9; the interaction disrupts RB1 binding to E2F1. Interacts with KAT2B/PCAF and EP300/P300. Interacts with PAX5. Interacts (phosphorylated and unphosphorylated) with BLCAP. May interact with NDC80. (Microbial infection) Interacts with adenovirus E1A protein. As to quaternary structure, (Microbial infection) Interacts with HPV E7 protein. In terms of assembly, (Microbial infection) Interacts with SV40 large T antigen. (Microbial infection) Interacts with human cytomegalovirus/HHV-5 proteins UL82 and UL123. As to quaternary structure, (Microbial infection) Interacts with molluscum contagiosum virus protein MC007. In terms of processing, phosphorylated by CDK6 and CDK4, and subsequently by CDK2 at Ser-567 in G1, thereby releasing E2F1 which is then able to activate cell growth. Dephosphorylated at the late M phase. SV40 large T antigen, HPV E7 and adenovirus E1A bind to the underphosphorylated, active form of pRb. Phosphorylation at Thr-821 and Thr-826 promotes interaction between the C-terminal domain C and the Pocket domain, and thereby inhibits interactions with heterodimeric E2F/DP transcription factor complexes. Dephosphorylated at Ser-795 by calcineruin upon calcium stimulation. CDK3/cyclin-C-mediated phosphorylation at Ser-807 and Ser-811 is required for G0-G1 transition. Phosphorylated by CDK1 and CDK2 upon TGFB1-mediated apoptosis. N-terminus is methylated by METTL11A/NTM1. Monomethylation at Lys-810 by SMYD2 enhances phosphorylation at Ser-807 and Ser-811, and promotes cell cycle progression. Monomethylation at Lys-860 by SMYD2 promotes interaction with L3MBTL1. Post-translationally, acetylated during keratinocyte differentiation. Acetylation at Lys-873 and Lys-874 regulates subcellular localization. Can be deacetylated by SIRT1. Expressed in the retina. Expressed in foreskin keratinocytes (at protein level).

Its subcellular location is the nucleus. The protein localises to the cytoplasm. Its function is as follows. Tumor suppressor that is a key regulator of the G1/S transition of the cell cycle. The hypophosphorylated form binds transcription regulators of the E2F family, preventing transcription of E2F-responsive genes. Both physically blocks E2Fs transactivating domain and recruits chromatin-modifying enzymes that actively repress transcription. Cyclin and CDK-dependent phosphorylation of RB1 induces its dissociation from E2Fs, thereby activating transcription of E2F responsive genes and triggering entry into S phase. RB1 also promotes the G0-G1 transition upon phosphorylation and activation by CDK3/cyclin-C. Directly involved in heterochromatin formation by maintaining overall chromatin structure and, in particular, that of constitutive heterochromatin by stabilizing histone methylation. Recruits and targets histone methyltransferases SUV39H1, KMT5B and KMT5C, leading to epigenetic transcriptional repression. Controls histone H4 'Lys-20' trimethylation. Inhibits the intrinsic kinase activity of TAF1. Mediates transcriptional repression by SMARCA4/BRG1 by recruiting a histone deacetylase (HDAC) complex to the c-FOS promoter. In resting neurons, transcription of the c-FOS promoter is inhibited by BRG1-dependent recruitment of a phospho-RB1-HDAC1 repressor complex. Upon calcium influx, RB1 is dephosphorylated by calcineurin, which leads to release of the repressor complex. In terms of biological role, (Microbial infection) In case of viral infections, interactions with SV40 large T antigen, HPV E7 protein or adenovirus E1A protein induce the disassembly of RB1-E2F1 complex thereby disrupting RB1's activity. This is Retinoblastoma-associated protein (RB1) from Homo sapiens (Human).